A 1083-amino-acid polypeptide reads, in one-letter code: Protein HOS4 (1083 aa).

2 disordered regions span residues 1-233 (MNET…RKLV) and 267-328 (SSLF…YRDS). 2 positions are modified to phosphoserine: Ser-14 and Ser-16. Residues 24-62 (TRREELEKISKQETSEEEDTAGKHEQRETLSEEVSDKFP) show a composition bias toward basic and acidic residues. The residue at position 37 (Thr-37) is a Phosphothreonine. Ser-67 bears the Phosphoserine mark. The span at 67 to 85 (SFRSQTTSVHQATQNNLNA) shows a compositional bias: polar residues. Residues 86 to 118 (KESEDLAHKNDASSHEGEVNGDSRPDDVPETNE) show a composition bias toward basic and acidic residues. Polar residues predominate over residues 135–149 (PNVRNVDIQNHQPFS). Basic and acidic residues predominate over residues 151–166 (DQLRAMLKEPKRKTVD). Acidic residues predominate over residues 167–185 (DFIEEEGLGAVEEEDLSDE). Basic and acidic residues predominate over residues 186-207 (VLEKNTTEPENVEKDIEYSDSD). The span at 277–293 (VKETNNNLSNMNSSPAQ) shows a compositional bias: polar residues. Phosphoserine is present on Ser-290. Over residues 300–310 (VSRSNDSNKSS) the composition is skewed to low complexity. Positions 314–323 (VSKRPKQKKG) are enriched in basic residues. ANK repeat units follow at residues 329–359 (GGRTRLQIACDKGKYDVVKKMIEEGGYDIND), 363–392 (AGNTALHEAALQGHIEIVELLIENGADVNI), and 398–427 (FGDTPLIDASANGHLDVVKYLLKNGADPTI). A disordered region spans residues 472 to 516 (AGIHNDKSKNGNNAHTIDQPPFDNTTKAKNEKAADSPSMASNIDE). A compositionally biased stretch (polar residues) spans 481 to 496 (NGNNAHTIDQPPFDNT). Ser-507 bears the Phosphoserine mark. 2 ANK repeats span residues 532–561 (AGKEKLFKASKEGHLPYVGTYVENGGKIDL) and 593–622 (NKTSALMVAVGRGHLGTVKLLLEAGADPTK). Disordered stretches follow at residues 661–742 (HSED…DDNE) and 762–790 (DEEKLKSISPLSMEPHSPKKAKSVEISKI). Positions 665–675 (NNDDDDDDDNN) are enriched in acidic residues. Residue Ser-698 is modified to Phosphoserine. Thr-700 is subject to Phosphothreonine. Basic and acidic residues predominate over residues 721–740 (NNDRDVKESTTSDSRKRLDD). Ser-778 is subject to Phosphoserine.

As to quaternary structure, identified in the Set3C complex with HOS2, HST1, SNT1, SIF2, CPR1 and SET3.

Its function is as follows. Unknown. Component of the Set3C complex, which is required to repress early/middle sporulation genes during meiosis. In Saccharomyces cerevisiae (strain ATCC 204508 / S288c) (Baker's yeast), this protein is Protein HOS4 (HOS4).